We begin with the raw amino-acid sequence, 605 residues long: Dolichyl-diphosphooligosaccharide--protein glycosyltransferase subunit 1 (605 aa).

Residues 1–22 (MEAPIVLLLLLWLALAPTPGSA) form the signal peptide. At 23 to 437 (SSEAPPLVNE…FNKVLMLQEP (415 aa)) the chain is on the lumenal side. The residue at position 185 (Lys-185) is an N6-acetyllysine. An N-linked (GlcNAc...) asparagine glycan is attached at Asn-297. A helical membrane pass occupies residues 438–455 (LLVVAAFYILFFTVIIYV). Over 456 to 605 (RLDFSITKDP…TKIDHILDAL (150 aa)) the chain is Cytoplasmic. At Lys-536 the chain carries N6-acetyllysine; alternate. Lys-536 is covalently cross-linked (Glycyl lysine isopeptide (Lys-Gly) (interchain with G-Cter in SUMO2); alternate).

Belongs to the OST1 family. As to quaternary structure, component of the oligosaccharyltransferase (OST) complex. OST exists in two different complex forms which contain common core subunits RPN1, RPN2, OST48, OST4, DAD1 and TMEM258, either STT3A or STT3B as catalytic subunits, and form-specific accessory subunits. STT3A complex assembly occurs through the formation of 3 subcomplexes. Subcomplex 1 contains RPN1 and TMEM258, subcomplex 2 contains the STT3A-specific subunits STT3A, DC2/OSTC, and KCP2 as well as the core subunit OST4, and subcomplex 3 contains RPN2, DAD1, and OST48. The STT3A complex can form stable complexes with the Sec61 complex or with both the Sec61 and TRAP complexes. Interacts with TMEM35A/NACHO. Ubiquitinated by the ECS(ASB11) complex. In terms of processing, ufmylated by UFL1 in response to endoplasmic reticulum stress, promoting reticulophagy of endoplasmic reticulum sheets. In terms of tissue distribution, expressed in all tissues tested.

Its subcellular location is the endoplasmic reticulum membrane. The protein operates within protein modification; protein glycosylation. Functionally, subunit of the oligosaccharyl transferase (OST) complex that catalyzes the initial transfer of a defined glycan (Glc(3)Man(9)GlcNAc(2) in eukaryotes) from the lipid carrier dolichol-pyrophosphate to an asparagine residue within an Asn-X-Ser/Thr consensus motif in nascent polypeptide chains, the first step in protein N-glycosylation. N-glycosylation occurs cotranslationally and the complex associates with the Sec61 complex at the channel-forming translocon complex that mediates protein translocation across the endoplasmic reticulum (ER). All subunits are required for a maximal enzyme activity. This is Dolichyl-diphosphooligosaccharide--protein glycosyltransferase subunit 1 from Rattus norvegicus (Rat).